A 399-amino-acid chain; its full sequence is Elongation factor Tu (399 aa).

Residues 10–204 (KPHVNIGTIG…AVDANIPEPE (195 aa)) enclose the tr-type G domain. The interval 19–26 (GHVDHGKT) is G1. 19 to 26 (GHVDHGKT) is a binding site for GTP. T26 contributes to the Mg(2+) binding site. Residues 60–64 (GITIN) form a G2 region. A G3 region spans residues 81–84 (DCPG). Residues 81–85 (DCPGH) and 136–139 (NKCD) each bind GTP. Positions 136 to 139 (NKCD) are G4. The G5 stretch occupies residues 174–176 (SGL).

It belongs to the TRAFAC class translation factor GTPase superfamily. Classic translation factor GTPase family. EF-Tu/EF-1A subfamily. Monomer.

It localises to the cytoplasm. It catalyses the reaction GTP + H2O = GDP + phosphate + H(+). In terms of biological role, GTP hydrolase that promotes the GTP-dependent binding of aminoacyl-tRNA to the A-site of ribosomes during protein biosynthesis. The chain is Elongation factor Tu from Synechococcus sp. (strain WH7803).